A 365-amino-acid chain; its full sequence is Eukaryotic translation initiation factor 3 subunit H (365 aa).

Positions 11 to 160 (VKVEALVVMK…LRAFRLSPKF (150 aa)) constitute an MPN domain.

Belongs to the eIF-3 subunit H family. In terms of assembly, component of the eukaryotic translation initiation factor 3 (eIF-3) complex.

It is found in the cytoplasm. Its function is as follows. Component of the eukaryotic translation initiation factor 3 (eIF-3) complex, which is involved in protein synthesis of a specialized repertoire of mRNAs and, together with other initiation factors, stimulates binding of mRNA and methionyl-tRNAi to the 40S ribosome. The eIF-3 complex specifically targets and initiates translation of a subset of mRNAs involved in cell proliferation. The protein is Eukaryotic translation initiation factor 3 subunit H of Aspergillus niger (strain ATCC MYA-4892 / CBS 513.88 / FGSC A1513).